The chain runs to 440 residues: Thymidine phosphorylase (440 aa).

Belongs to the thymidine/pyrimidine-nucleoside phosphorylase family. As to quaternary structure, homodimer.

The enzyme catalyses thymidine + phosphate = 2-deoxy-alpha-D-ribose 1-phosphate + thymine. It participates in pyrimidine metabolism; dTMP biosynthesis via salvage pathway; dTMP from thymine: step 1/2. Its function is as follows. The enzymes which catalyze the reversible phosphorolysis of pyrimidine nucleosides are involved in the degradation of these compounds and in their utilization as carbon and energy sources, or in the rescue of pyrimidine bases for nucleotide synthesis. The chain is Thymidine phosphorylase from Escherichia coli (strain K12 / DH10B).